A 183-amino-acid polypeptide reads, in one-letter code: Beta-defensin 129 (183 aa).

Residues 1–19 (MKLLFPIFASLMLQYQVNT) form the signal peptide. 3 disulfide bridges follow: Cys27–Cys53, Cys34–Cys48, and Cys38–Cys54. Residues 141 to 183 (TATSTKSNTKESRDSATASPPPAPPPPNILPTPSLELEEAEEQ) are disordered. Residues 159 to 170 (SPPPAPPPPNIL) show a composition bias toward pro residues.

It belongs to the beta-defensin family.

The protein resides in the secreted. Its function is as follows. Has antibacterial activity. This is Beta-defensin 129 (DEFB129) from Pan troglodytes (Chimpanzee).